Consider the following 212-residue polypeptide: Pyridoxine/pyridoxamine 5'-phosphate oxidase (212 aa).

Substrate is bound by residues 8 to 11 and Lys-66; that span reads RREY. FMN is bound by residues 61-66, 76-77, Arg-82, Lys-83, and Gln-105; these read RIVLLK and FT. 3 residues coordinate substrate: Tyr-123, Arg-127, and Ser-131. FMN is bound by residues 140-141 and Trp-185; that span reads QS. 191 to 193 contributes to the substrate binding site; sequence RLH. FMN is bound at residue Arg-195.

The protein belongs to the pyridoxamine 5'-phosphate oxidase family. As to quaternary structure, homodimer. It depends on FMN as a cofactor.

The catalysed reaction is pyridoxamine 5'-phosphate + O2 + H2O = pyridoxal 5'-phosphate + H2O2 + NH4(+). It catalyses the reaction pyridoxine 5'-phosphate + O2 = pyridoxal 5'-phosphate + H2O2. The protein operates within cofactor metabolism; pyridoxal 5'-phosphate salvage; pyridoxal 5'-phosphate from pyridoxamine 5'-phosphate: step 1/1. It functions in the pathway cofactor metabolism; pyridoxal 5'-phosphate salvage; pyridoxal 5'-phosphate from pyridoxine 5'-phosphate: step 1/1. Functionally, catalyzes the oxidation of either pyridoxine 5'-phosphate (PNP) or pyridoxamine 5'-phosphate (PMP) into pyridoxal 5'-phosphate (PLP). This chain is Pyridoxine/pyridoxamine 5'-phosphate oxidase, found in Shewanella baltica (strain OS155 / ATCC BAA-1091).